The following is a 135-amino-acid chain: MGLTSQLIPVLVCLLACTSHFVHGHKCDITLEEIIKTLNILTARKNSCMELPVADVFAAPKNTTEKETLCRAGIELRRIYRSHTCLNRFLSRLDRNLSGLASKTCSVNEAKTSTSTLKNLLERLKTIMKEKYSKC.

Positions 1-24 are cleaved as a signal peptide; sequence MGLTSQLIPVLVCLLACTSHFVHG. Disulfide bonds link Cys27–Cys135, Cys48–Cys85, and Cys70–Cys105. 2 N-linked (GlcNAc...) asparagine glycosylation sites follow: Asn62 and Asn96.

Belongs to the IL-4/IL-13 family.

Its subcellular location is the secreted. Participates in at least several B-cell activation processes as well as of other cell types. It is a costimulator of DNA-synthesis. It induces the expression of class II MHC molecules on resting B-cells. It enhances both secretion and cell surface expression of IgE and IgG1. It also regulates the expression of the low affinity Fc receptor for IgE (CD23) on both lymphocytes and monocytes. Positively regulates IL31RA expression in macrophages. Stimulates autophagy in dendritic cells by interfering with mTORC1 signaling and through the induction of RUFY4. The protein is Interleukin-4 (IL4) of Cervus elaphus (Red deer).